The following is a 602-amino-acid chain: Aspartate--tRNA(Asp/Asn) ligase (602 aa).

Glutamate 177 is an L-aspartate binding site. The interval 201–204 (QLFK) is aspartate. Arginine 223 contributes to the L-aspartate binding site. ATP contacts are provided by residues 223–225 (RDE) and glutamine 232. Position 460 (histidine 460) interacts with L-aspartate. Glutamate 497 is a binding site for ATP. Arginine 504 is an L-aspartate binding site. Position 549–552 (549–552 (GLDR)) interacts with ATP.

It belongs to the class-II aminoacyl-tRNA synthetase family. Type 1 subfamily. In terms of assembly, homodimer.

It localises to the cytoplasm. The catalysed reaction is tRNA(Asx) + L-aspartate + ATP = L-aspartyl-tRNA(Asx) + AMP + diphosphate. In terms of biological role, aspartyl-tRNA synthetase with relaxed tRNA specificity since it is able to aspartylate not only its cognate tRNA(Asp) but also tRNA(Asn). Reaction proceeds in two steps: L-aspartate is first activated by ATP to form Asp-AMP and then transferred to the acceptor end of tRNA(Asp/Asn). The polypeptide is Aspartate--tRNA(Asp/Asn) ligase (Prochlorococcus marinus (strain MIT 9515)).